The chain runs to 238 residues: Ribonuclease PH (238 aa).

Phosphate is bound by residues R86 and 124–126 (GTR).

It belongs to the RNase PH family. Homohexameric ring arranged as a trimer of dimers.

The enzyme catalyses tRNA(n+1) + phosphate = tRNA(n) + a ribonucleoside 5'-diphosphate. Phosphorolytic 3'-5' exoribonuclease that plays an important role in tRNA 3'-end maturation. Removes nucleotide residues following the 3'-CCA terminus of tRNAs; can also add nucleotides to the ends of RNA molecules by using nucleoside diphosphates as substrates, but this may not be physiologically important. Probably plays a role in initiation of 16S rRNA degradation (leading to ribosome degradation) during starvation. The chain is Ribonuclease PH from Phenylobacterium zucineum (strain HLK1).